A 1744-amino-acid polypeptide reads, in one-letter code: Complement C4-B (1744 aa).

A signal peptide spans 1–19; it reads MRLLWGLIWASSFFTLSLQ. Cysteine 68 and cysteine 97 are joined by a disulfide. N-linked (GlcNAc...) asparagine glycosylation is present at asparagine 226. The cysteines at positions 635 and 669 are disulfide-linked. A propeptide spanning residues 676–679 is cleaved from the precursor; the sequence is RKKR. 3 disulfide bridges follow: cysteine 702-cysteine 728, cysteine 703-cysteine 735, and cysteine 716-cysteine 736. Residues 702–736 form the Anaphylatoxin-like domain; the sequence is CCQDGVTRLPMMRSCEQRAARVQQPDCREPFLSCC. Residue asparagine 862 is glycosylated (N-linked (GlcNAc...) asparagine). Residue serine 918 is modified to Phosphoserine. Positions 1010–1013 form a cross-link, isoglutamyl cysteine thioester (Cys-Gln); sequence CGEQ. N-linked (GlcNAc...) asparagine glycans are attached at residues asparagine 1328 and asparagine 1391. Residues tyrosine 1417, tyrosine 1420, and tyrosine 1422 each carry the sulfotyrosine modification. Residues 1447-1453 constitute a propeptide that is removed on maturation; it reads RRNRRRR. Intrachain disulfides connect cysteine 1471-cysteine 1535, cysteine 1583-cysteine 1588, cysteine 1595-cysteine 1673, cysteine 1618-cysteine 1742, and cysteine 1718-cysteine 1727. The region spanning 1595–1742 is the NTR domain; the sequence is CPRQRRALER…FLQEYGTQGC (148 aa).

As to quaternary structure, in absence of complement activation, circulates in blood as a disulfide-linked trimer of an alpha, beta and gamma chain. In terms of assembly, complement C4b is composed of complement C4b-A, complement C4 beta and complement C4 gamma chains that are associated via disulfide bonds. Non-enzymatic component of the C3 convertase, also named C4bC2b, composed of the serine protease complement C2b (C2), as well as complement C4b. Non-enzymatic component of the C5 convertase, also named C4bC2bC3b, composed of the serine protease complement C2b (C2), complement C3b, as well as complement C4b. Interacts with CR1 (via Sushi 1 and Sushi 2 domains). (Microbial infection) Binds B.burgdorferi OspC, the interaction is inhibited by complement factor C2. This binding may inhibit the complement cascade and allow the bacteria to survive in the host bloodstream. Prior to secretion, the single-chain precursor is enzymatically cleaved by plasminogen (PLG) to yield non-identical chains alpha, beta and gamma. During activation of the complement systems, the alpha chain is cleaved into C4a and C4b by different proteases depending on the complement pathway: C4b stays linked to the beta and gamma chains, while C4a is released in the plasma. The alpha chain is cleaved by C1S to generate C4a and C4b following activation by the classical complement system. The alpha chain is cleaved to generate C4a and C4b by MASP2 following activation by the lectin complement system. The alpha chain is cleaved by GZMK to generate C4a and C4b following activation by the GZMK complement system. Further degradation of C4b by C1 into the inactive fragments C4c and C4d blocks the generation of C3 convertase. The proteolytic cleavages often are incomplete so that many structural forms can be found in plasma. Post-translationally, upon activation, the internal thioester bond reacts with carbohydrate antigens on the target surface to form amide or ester bonds, leading to covalent association with the surface of pathogens. In terms of processing, complement C4b interacts with complement C3b via a thioester linkage. N- and O-glycosylated. O-glycosylated with a core 1 or possibly core 8 glycan. As to expression, complement component C4 is expressed at highest levels in the liver, at moderate levels in the adrenal cortex, adrenal medulla, thyroid gland, and the kidney, and at lowest levels in the heart, ovary, small intestine, thymus, pancreas and spleen. The extra-hepatic sites of expression may be important for the local protection and inflammatory response.

The protein localises to the secreted. It is found in the synapse. It localises to the cell projection. The protein resides in the axon. Its subcellular location is the dendrite. The protein localises to the cell surface. Functionally, precursor of non-enzymatic components of the classical, lectin and GZMK complement pathways, which consist in a cascade of proteins that leads to phagocytosis and breakdown of pathogens and signaling that strengthens the adaptive immune system. Its function is as follows. Non-enzymatic component of C3 and C5 convertases. Generated following cleavage by complement proteases (C1S, MASP2 or GZMK, depending on the complement pathway), it covalently attaches to the surface of pathogens, where it acts as an opsonin that marks the surface of antigens for removal. It then recruits the serine protease complement C2b to form the C3 and C5 convertases, which cleave and activate C3 and C5, respectively, the next components of the complement pathways. Complement C4b-B isotype catalyzes the transacylation of the thioester carbonyl group to form ester bonds with carbohydrate antigens, while C4b-A isotype is responsible for effective binding to form amide bonds with immune aggregates or protein antigens. In terms of biological role, putative humoral mediator released following cleavage by complement proteases (C1S, MASP2 or GZMK, depending on the complement pathway). While it is strongly similar to anaphylatoxins, its role is unclear. Was reported to act as a mediator of local inflammatory process; however these effects were probably due to contamination with C3a and/C5a anaphylatoxins in biological assays. This is Complement C4-B from Homo sapiens (Human).